A 388-amino-acid chain; its full sequence is S-adenosylmethionine synthase (388 aa).

His-16 is an ATP binding site. A Mg(2+)-binding site is contributed by Asp-18. Glu-44 provides a ligand contact to K(+). Glu-57 and Gln-100 together coordinate L-methionine. The tract at residues 100-110 (QSPDIAQGVDK) is flexible loop. ATP contacts are provided by residues 167–169 (DAK), 233–234 (RF), Asp-242, 248–249 (RK), Ala-265, and Lys-269. Asp-242 is a binding site for L-methionine. Residue Lys-273 participates in L-methionine binding.

This sequence belongs to the AdoMet synthase family. As to quaternary structure, homotetramer; dimer of dimers. Mg(2+) is required as a cofactor. It depends on K(+) as a cofactor.

Its subcellular location is the cytoplasm. The enzyme catalyses L-methionine + ATP + H2O = S-adenosyl-L-methionine + phosphate + diphosphate. The protein operates within amino-acid biosynthesis; S-adenosyl-L-methionine biosynthesis; S-adenosyl-L-methionine from L-methionine: step 1/1. Its function is as follows. Catalyzes the formation of S-adenosylmethionine (AdoMet) from methionine and ATP. The overall synthetic reaction is composed of two sequential steps, AdoMet formation and the subsequent tripolyphosphate hydrolysis which occurs prior to release of AdoMet from the enzyme. The polypeptide is S-adenosylmethionine synthase (Polynucleobacter asymbioticus (strain DSM 18221 / CIP 109841 / QLW-P1DMWA-1) (Polynucleobacter necessarius subsp. asymbioticus)).